A 254-amino-acid chain; its full sequence is Phosphoglycerate mutase 1 (254 aa).

Substrate is bound by residues 10–17 and 23–24; these read RHGESAWN and SG. H11 functions as the Tele-phosphohistidine intermediate in the catalytic mechanism. Phosphoserine is present on residues S14 and S23. Residue Y26 is modified to Phosphotyrosine. At S31 the chain carries Phosphoserine. Substrate is bound by residues R62, 89 to 92, and K100; that span reads ERHY. The active-site Proton donor/acceptor is E89. K106 bears the N6-acetyllysine mark. 116–117 provides a ligand contact to substrate; that stretch reads RR. A Phosphoserine modification is found at S118. 187 to 188 provides a ligand contact to substrate; sequence GN. K251 is subject to N6-acetyllysine; alternate. K251 carries the post-translational modification N6-succinyllysine; alternate. K253 and K254 each carry N6-acetyllysine.

This sequence belongs to the phosphoglycerate mutase family. BPG-dependent PGAM subfamily. Homodimer. In terms of processing, acetylated at Lys-253, Lys-253 and Lys-254 under high glucose condition. Acetylation increases catalytic activity. Under glucose restriction SIRT1 levels dramatically increase and it deacetylates the enzyme.

It catalyses the reaction (2R)-2-phosphoglycerate = (2R)-3-phosphoglycerate. The enzyme catalyses (2R)-3-phospho-glyceroyl phosphate = (2R)-2,3-bisphosphoglycerate + H(+). In terms of biological role, catalyzes the interconversion of 2-phosphoglycerate and 3-phosphoglyceratea crucial step in glycolysis, by using 2,3-bisphosphoglycerate. Also catalyzes the interconversion of (2R)-2,3-bisphosphoglycerate and (2R)-3-phospho-glyceroyl phosphate. This chain is Phosphoglycerate mutase 1, found in Pongo abelii (Sumatran orangutan).